A 287-amino-acid polypeptide reads, in one-letter code: Inorganic pyrophosphatase (287 aa).

Residue arginine 79 coordinates diphosphate. Mg(2+)-binding residues include aspartate 116, aspartate 121, and aspartate 153.

The protein belongs to the PPase family. The cofactor is Mg(2+).

The protein localises to the cytoplasm. The enzyme catalyses diphosphate + H2O = 2 phosphate + H(+). In Debaryomyces hansenii (strain ATCC 36239 / CBS 767 / BCRC 21394 / JCM 1990 / NBRC 0083 / IGC 2968) (Yeast), this protein is Inorganic pyrophosphatase (IPP1).